The primary structure comprises 79 residues: Small ribosomal subunit protein uS17 (79 aa).

Belongs to the universal ribosomal protein uS17 family. Part of the 30S ribosomal subunit.

One of the primary rRNA binding proteins, it binds specifically to the 5'-end of 16S ribosomal RNA. This is Small ribosomal subunit protein uS17 from Bartonella henselae (strain ATCC 49882 / DSM 28221 / CCUG 30454 / Houston 1) (Rochalimaea henselae).